The chain runs to 443 residues: Xaa-Pro dipeptidase (443 aa).

Residues Asp246, Asp257, His339, Glu384, and Glu423 each contribute to the Mn(2+) site.

Belongs to the peptidase M24B family. Bacterial-type prolidase subfamily. It depends on Mn(2+) as a cofactor.

The catalysed reaction is Xaa-L-Pro dipeptide + H2O = an L-alpha-amino acid + L-proline. Its function is as follows. Splits dipeptides with a prolyl residue in the C-terminal position. The sequence is that of Xaa-Pro dipeptidase from Cronobacter sakazakii (strain ATCC BAA-894) (Enterobacter sakazakii).